Reading from the N-terminus, the 352-residue chain is uncharacterized protein (352 aa).

The protein to Synechocystis PCC 6803 slr0039.

This is an uncharacterized protein from Archaeoglobus fulgidus (strain ATCC 49558 / DSM 4304 / JCM 9628 / NBRC 100126 / VC-16).